A 270-amino-acid polypeptide reads, in one-letter code: Type III pantothenate kinase (270 aa).

19-26 is a binding site for ATP; that stretch reads DIGNTSTT. Substrate contacts are provided by residues Tyr-109 and 116 to 119; that span reads GADR. Asp-118 serves as the catalytic Proton acceptor. Residue Asp-139 coordinates K(+). An ATP-binding site is contributed by Thr-142. Residue Thr-194 coordinates substrate.

This sequence belongs to the type III pantothenate kinase family. As to quaternary structure, homodimer. The cofactor is NH4(+). K(+) serves as cofactor.

Its subcellular location is the cytoplasm. It catalyses the reaction (R)-pantothenate + ATP = (R)-4'-phosphopantothenate + ADP + H(+). It functions in the pathway cofactor biosynthesis; coenzyme A biosynthesis; CoA from (R)-pantothenate: step 1/5. Functionally, catalyzes the phosphorylation of pantothenate (Pan), the first step in CoA biosynthesis. The polypeptide is Type III pantothenate kinase (Chlorobaculum tepidum (strain ATCC 49652 / DSM 12025 / NBRC 103806 / TLS) (Chlorobium tepidum)).